Here is a 346-residue protein sequence, read N- to C-terminus: STE20-related kinase adapter protein stlk (346 aa).

The Protein kinase domain occupies 10-298 (YKLLEILKNG…ASKLMTHSFL (289 aa)). Residues 16-24 (LKNGMIGTV) and Lys38 each bind ATP.

This sequence belongs to the protein kinase superfamily. STE Ser/Thr protein kinase family. STE20 subfamily.

This Drosophila melanogaster (Fruit fly) protein is STE20-related kinase adapter protein stlk.